The primary structure comprises 126 residues: uncharacterized protein (126 aa).

The next 2 helical transmembrane spans lie at 40–57 (IDKW…VSFF) and 72–94 (ILIA…ILGG).

The protein localises to the cell membrane. This is an uncharacterized protein from Pasteurella multocida (strain Pm70).